The primary structure comprises 1588 residues: Paternally-expressed gene 3 protein (1588 aa).

One can recognise an SCAN box domain in the interval 46 to 128; the sequence is HQRFRNLIYV…TLLENYKEMY (83 aa). Disordered regions lie at residues 128–231, 265–304, and 317–347; these read YQPE…YQNV, GHSHMTQGHSSRSKRSAYPSTSRGLKTMPEAKKSTHRRGI, and KFIKDVSRSSKSGRARESSDRSQRFPRMSDD. Acidic residues predominate over residues 129–142; that stretch reads QPEDDNNSDVTSDD. 4 stretches are compositionally biased toward basic and acidic residues: residues 143-152, 160-181, 205-224, and 293-304; these read DMTRNRRESS, FSDRDWDRRGRSRDMEPRDRWS, FEMDREDDRDSRAYESRSQD, and PEAKKSTHRRGI. 3 consecutive C2H2-type zinc fingers follow at residues 452–474, 505–527, and 563–585; these read YVCDECGRSFSVISEFVEHQIMH, FECKDCGETFNKSAALAEHRKIH, and YECRVCKETFLHSSALIEHQKIH. Over residues 588–607 the composition is skewed to basic and acidic residues; the sequence is DDKDNEREHERERERERGET. A disordered region spans residues 588–608; the sequence is DDKDNEREHERERERERGETF. A C2H2-type 4 zinc finger spans residues 627–649; that stretch reads YECKVCGETFLHSSSLKEHQKIH. Disordered regions lie at residues 839 to 889 and 905 to 929; these read VASK…SKNR and QKSVPGEGSGEFKKDGEFSVPSSNV. Basic and acidic residues predominate over residues 868–881; sequence LNDKRQKIPARENP. Residues 969–991 form a C2H2-type 5 zinc finger; that stretch reads YECQECGECFAHSSDLTEHQKIH. Positions 1056–1104 are disordered; sequence EKSHGEESQGENTDGEETHSEETHGQETIEDPVIQGSDMEDPQKDDPDD. Residues 1071-1082 show a composition bias toward basic and acidic residues; that stretch reads EETHSEETHGQE. 5 consecutive C2H2-type zinc fingers follow at residues 1107–1129, 1163–1185, 1225–1247, 1282–1304, and 1332–1354; these read YECEDCGLGFVDLTDLTDHQKVH, YECPKCGESFIHSSFLFEHQRIH, IRCLLCGQGFIHSSALNEHMRLH, FECAVCGESFVNPAELADHVTVH, and YECKDCGKSFIHSTVLTKHKELH. Over residues 1396 to 1415 the composition is skewed to acidic residues; that stretch reads EPEVEAAEPEVEAAEPEVEA. The disordered stretch occupies residues 1396–1495; the sequence is EPEVEAAEPE…GIEDPEEGED (100 aa). 7 consecutive repeat copies span residues 1397–1403, 1404–1410, 1411–1417, 1418–1422, 1425–1429, 1432–1436, and 1439–1443. A 3 X 7 AA repeat of P-E-V-E-A-A-E region spans residues 1397–1417; it reads PEVEAAEPEVEAAEPEVEAAE. Residues 1418–1443 are 4 X 5 AA repeat of P-X-G-E-A; sequence PNGEAEGPDGEAAEPIGEAGQPNGEA. Composition is skewed to acidic residues over residues 1449-1466 and 1475-1495; these read DADEPDGAGIEDPEERAE and PEGDADEPDGVGIEDPEEGED. 2 consecutive C2H2-type zinc fingers follow at residues 1505 to 1527 and 1564 to 1586; these read YDCHECTETFTSSTAFSEHLKTH and FKCDVCGQLFNDRLSLARHQNTH.

The protein belongs to the krueppel C2H2-type zinc-finger protein family. As to quaternary structure, homodimer. Interacts with SIAH1A and SIAH2. Interacts with TRAF2. In terms of tissue distribution, brain, glial cells, astrocytes, embryo, placenta, testis, ovary and uterus. In the placenta it is found in the layer of villous cytotrophoblast cells while in the ovary it is found in the cells of the ovarian stroma including the thecal layers around the follicles. Expression is highly repressed in glioma cell lines.

The protein resides in the nucleus. It localises to the cytoplasm. In terms of biological role, induces apoptosis in cooperation with SIAH1A. Acts as a mediator between p53/TP53 and BAX in a neuronal death pathway that is activated by DNA damage. Acts synergistically with TRAF2 and inhibits TNF induced apoptosis through activation of NF-kappa-B. Possesses a tumor suppressing activity in glioma cells. This Homo sapiens (Human) protein is Paternally-expressed gene 3 protein (PEG3).